Here is a 219-residue protein sequence, read N- to C-terminus: Histone H1.01 (219 aa).

Composition is skewed to low complexity over residues 1 to 19 (MSET…GAKA) and 27 to 39 (AAGG…PAGP). Disordered stretches follow at residues 1–40 (MSET…AGPS) and 94–219 (LVQT…AKKK). Ser2 carries the post-translational modification N-acetylserine. An H15 domain is found at 37-110 (AGPSVTELIT…GASGSFRLNK (74 aa)). Basic residues-rich tracts occupy residues 119 to 134 (APRK…KPAA), 142 to 159 (KKPK…KAKK), 167 to 185 (KAAK…KKAA), and 192 to 219 (KAVK…AKKK).

The protein belongs to the histone H1/H5 family.

The protein resides in the nucleus. The protein localises to the chromosome. Histones H1 are necessary for the condensation of nucleosome chains into higher-order structures. The chain is Histone H1.01 from Gallus gallus (Chicken).